A 462-amino-acid polypeptide reads, in one-letter code: Fasciclin-like arabinogalactan protein 18 (462 aa).

Residues 1 to 25 (MDRCIYGCSVITIFFSFFFLLNASA) form the signal peptide. 3 N-linked (GlcNAc...) asparagine glycosylation sites follow: N32, N77, and N293. FAS1 domains lie at 40 to 185 (NSNS…ERLL) and 271 to 414 (VKDF…DGVL).

The protein belongs to the fasciclin-like AGP family.

The protein resides in the secreted. May be a cell surface adhesion protein. The polypeptide is Fasciclin-like arabinogalactan protein 18 (FLA18) (Arabidopsis thaliana (Mouse-ear cress)).